We begin with the raw amino-acid sequence, 219 residues long: Large ribosomal subunit protein uL4c (219 aa).

The interval 53-81 is disordered; that stretch reads REHTASTKTKSQVRGGGKKPWKQKGTGRA. Positions 68–79 are enriched in basic residues; the sequence is GGKKPWKQKGTG.

This sequence belongs to the universal ribosomal protein uL4 family. In terms of assembly, part of the 50S ribosomal subunit.

The protein localises to the plastid. It localises to the chloroplast. In terms of biological role, probably binds the 23S rRNA. This Cyanidium caldarium (Red alga) protein is Large ribosomal subunit protein uL4c (rpl4).